Consider the following 296-residue polypeptide: Acetylglutamate kinase (296 aa).

Substrate contacts are provided by residues Gly71–Gly72, Arg93, and Asn186.

The protein belongs to the acetylglutamate kinase family. ArgB subfamily.

It localises to the cytoplasm. It catalyses the reaction N-acetyl-L-glutamate + ATP = N-acetyl-L-glutamyl 5-phosphate + ADP. It functions in the pathway amino-acid biosynthesis; L-arginine biosynthesis; N(2)-acetyl-L-ornithine from L-glutamate: step 2/4. Functionally, catalyzes the ATP-dependent phosphorylation of N-acetyl-L-glutamate. The sequence is that of Acetylglutamate kinase from Synechococcus sp. (strain RCC307).